Reading from the N-terminus, the 109-residue chain is MAITDTEFHQLADDMFQAIENAIETAIDEQDADVDIDASGNVLQLEFVDGSKIVINKQEPLHEIWVATRFGGYHFGFVEGKWMDGRNGGEFMPFVQESIERQGGIKLSF.

This sequence belongs to the frataxin family.

Involved in iron-sulfur (Fe-S) cluster assembly. May act as a regulator of Fe-S biogenesis. The sequence is that of Iron-sulfur cluster assembly protein CyaY from Shewanella baltica (strain OS155 / ATCC BAA-1091).